We begin with the raw amino-acid sequence, 616 residues long: Carboxylic acid transporter protein homolog (616 aa).

A compositionally biased stretch (basic and acidic residues) spans 1–11 (MSSSITDEKIS). Residues 1 to 65 (MSSSITDEKI…LYHNPSLPAQ (65 aa)) form a disordered region. N-acetylserine is present on serine 2. Residues 2–140 (SSSITDEKIS…LRKMTWQNWN (139 aa)) are Cytoplasmic-facing. At serine 4 the chain carries Phosphoserine. A Glycyl lysine isopeptide (Lys-Gly) (interchain with G-Cter in ubiquitin) cross-link involves residue lysine 9. Residues serine 11, serine 61, and serine 66 each carry the phosphoserine modification. The residue at position 70 (threonine 70) is a Phosphothreonine. Residues 141–161 (YFFMGYFAWLSAAWAFFCVSV) traverse the membrane as a helical segment. The Extracellular portion of the chain corresponds to 162–176 (SVAPLAELYDRPTKD). The helical transmembrane segment at 177 to 197 (ITWGLGLVLFVRSAGAVIFGL) threads the bilayer. The Cytoplasmic portion of the chain corresponds to 198 to 205 (WTDKSSRK). A helical membrane pass occupies residues 206 to 226 (WPYITCLFLFVIAQLCTPWCD). Residues 227–230 (TYEK) are Extracellular-facing. A helical transmembrane segment spans residues 231–251 (FLGVRWITGIAMGGIYGCASA). Residues 252–263 (TAIEDAPVKARS) are Cytoplasmic-facing. A helical transmembrane segment spans residues 264–284 (FLSGLFFSAYAMGFIFAIIFY). Residues 285 to 296 (RAFGYFRDDGWK) lie on the Extracellular side of the membrane. The helical transmembrane segment at 297–317 (ILFWFSIFLPILLIFWRLLWP) threads the bilayer. Over 318–363 (ETKYFTKVLKARKLILSDAVKANGGEPLPKANFKQKMVSMKRTVQK) the chain is Cytoplasmic. A Glycyl lysine isopeptide (Lys-Gly) (interchain with G-Cter in ubiquitin) cross-link involves residue lysine 338. Residues 364–384 (YWLLFAYLVVLLVGPNYLTHA) form a helical membrane-spanning segment. At 385-402 (SQDLLPTMLRAQLGLSKD) the chain is on the extracellular side. The helical transmembrane segment at 403 to 423 (AVTVIVVVTNIGAICGGMIFG) threads the bilayer. At 424 to 432 (QFMEVTGRR) the chain is on the cytoplasmic side. Residues 433–453 (LGLLIACTMGGCFTYPAFMLR) traverse the membrane as a helical segment. Residues 454–457 (SEKA) lie on the Extracellular side of the membrane. The helical transmembrane segment at 458–478 (ILGAGFMLYFCVFGVWGILPI) threads the bilayer. Over 479-489 (HLAELAPADAR) the chain is Cytoplasmic. A helical transmembrane segment spans residues 490 to 510 (ALVAGLSYQLGNLASAAASTI). Topologically, residues 511–535 (ETQLADRYPLERDASGAVIKEDYAK) are extracellular. The chain crosses the membrane as a helical span at residues 536–556 (VMAILTGSVFIFTFACVFVGH). Residues 557–616 (EKFHRDLSSPVMKKYINQVEEYEADGLSISDIVEQKTECASVKMIDSNVSKTYEEHIETV) lie on the Cytoplasmic side of the membrane. A phosphoserine mark is found at serine 584, serine 603, and serine 606.

This sequence belongs to the major facilitator superfamily. Sugar transporter (TC 2.A.1.1) family.

It localises to the membrane. Essential to lactate transport. In Saccharomyces cerevisiae (strain ATCC 204508 / S288c) (Baker's yeast), this protein is Carboxylic acid transporter protein homolog (JEN1).